We begin with the raw amino-acid sequence, 318 residues long: TPR repeat-containing protein MJ0940 (318 aa).

TPR repeat units lie at residues 17–50, 84–117, 119–151, 152–185, 186–219, 221–254, 255–288, and 289–318; these read SLTY…NPDF, PVAY…EEKF, TAFF…APNF, IPAY…KEND, TNAI…LNVT, IEVI…RPDD, ASLW…MPHH, and TKAL…ALDR.

In Methanocaldococcus jannaschii (strain ATCC 43067 / DSM 2661 / JAL-1 / JCM 10045 / NBRC 100440) (Methanococcus jannaschii), this protein is TPR repeat-containing protein MJ0940.